The sequence spans 283 residues: Formamidopyrimidine-DNA glycosylase (283 aa).

Pro-2 serves as the catalytic Schiff-base intermediate with DNA. The active-site Proton donor is Glu-3. Catalysis depends on Lys-60, which acts as the Proton donor; for beta-elimination activity. Residues His-100, Arg-119, and Arg-164 each coordinate DNA. The segment at 249-283 (WVYNRAGEPCKVCGDVIQRIKLGGRSSHFCRQCQV) adopts an FPG-type zinc-finger fold. Arg-273 serves as the catalytic Proton donor; for delta-elimination activity.

The protein belongs to the FPG family. As to quaternary structure, monomer. Requires Zn(2+) as cofactor.

The catalysed reaction is Hydrolysis of DNA containing ring-opened 7-methylguanine residues, releasing 2,6-diamino-4-hydroxy-5-(N-methyl)formamidopyrimidine.. The enzyme catalyses 2'-deoxyribonucleotide-(2'-deoxyribose 5'-phosphate)-2'-deoxyribonucleotide-DNA = a 3'-end 2'-deoxyribonucleotide-(2,3-dehydro-2,3-deoxyribose 5'-phosphate)-DNA + a 5'-end 5'-phospho-2'-deoxyribonucleoside-DNA + H(+). In terms of biological role, involved in base excision repair of DNA damaged by oxidation or by mutagenic agents. Acts as a DNA glycosylase that recognizes and removes damaged bases. Has a preference for oxidized purines, such as 7,8-dihydro-8-oxoguanine (8-oxoG). Has AP (apurinic/apyrimidinic) lyase activity and introduces nicks in the DNA strand. Cleaves the DNA backbone by beta-delta elimination to generate a single-strand break at the site of the removed base with both 3'- and 5'-phosphates. The chain is Formamidopyrimidine-DNA glycosylase from Nostoc sp. (strain PCC 7120 / SAG 25.82 / UTEX 2576).